A 342-amino-acid chain; its full sequence is Isopentenyl-diphosphate delta-isomerase (342 aa).

Substrate is bound at residue 11–12; it reads RK. Residues serine 68, 69 to 71, serine 99, and asparagine 127 contribute to the FMN site; that span reads SMT. 99–101 is a binding site for substrate; sequence SMR. Glutamate 163 serves as a coordination point for Mg(2+). Residues lysine 194, threonine 224, and 295 to 296 each bind FMN; that span reads AG.

It belongs to the IPP isomerase type 2 family. In terms of assembly, homooctamer. Dimer of tetramers. Requires FMN as cofactor. NADPH is required as a cofactor. It depends on Mg(2+) as a cofactor.

The protein resides in the cytoplasm. It carries out the reaction isopentenyl diphosphate = dimethylallyl diphosphate. Involved in the biosynthesis of isoprenoids. Catalyzes the 1,3-allylic rearrangement of the homoallylic substrate isopentenyl (IPP) to its allylic isomer, dimethylallyl diphosphate (DMAPP). The sequence is that of Isopentenyl-diphosphate delta-isomerase from Rickettsia prowazekii (strain Madrid E).